The sequence spans 290 residues: Ribosomal RNA small subunit methyltransferase A (290 aa).

Positions 27, 29, 54, 75, 100, and 125 each coordinate S-adenosyl-L-methionine.

Belongs to the class I-like SAM-binding methyltransferase superfamily. rRNA adenine N(6)-methyltransferase family. RsmA subfamily.

It is found in the cytoplasm. The enzyme catalyses adenosine(1518)/adenosine(1519) in 16S rRNA + 4 S-adenosyl-L-methionine = N(6)-dimethyladenosine(1518)/N(6)-dimethyladenosine(1519) in 16S rRNA + 4 S-adenosyl-L-homocysteine + 4 H(+). In terms of biological role, specifically dimethylates two adjacent adenosines (A1518 and A1519) in the loop of a conserved hairpin near the 3'-end of 16S rRNA in the 30S particle. May play a critical role in biogenesis of 30S subunits. The chain is Ribosomal RNA small subunit methyltransferase A from Streptococcus pneumoniae (strain JJA).